Here is a 259-residue protein sequence, read N- to C-terminus: GTP cyclohydrolase FolE2 (259 aa).

This sequence belongs to the GTP cyclohydrolase IV family.

The enzyme catalyses GTP + H2O = 7,8-dihydroneopterin 3'-triphosphate + formate + H(+). It participates in cofactor biosynthesis; 7,8-dihydroneopterin triphosphate biosynthesis; 7,8-dihydroneopterin triphosphate from GTP: step 1/1. Its function is as follows. Converts GTP to 7,8-dihydroneopterin triphosphate. This is GTP cyclohydrolase FolE2 from Thermosipho africanus (strain TCF52B).